Here is a 114-residue protein sequence, read N- to C-terminus: Thioredoxin H1 (114 aa).

Ala2 is modified (N-acetylalanine). One can recognise a Thioredoxin domain in the interval 2–114; the sequence is ASEEGQVIAC…LQSTIAKHLA (113 aa). Active-site nucleophile residues include Cys40 and Cys43. Cysteines 40 and 43 form a disulfide.

This sequence belongs to the thioredoxin family. Plant H-type subfamily. As to quaternary structure, interacts with FBA6. Interacts with MDH1.

It localises to the cytoplasm. In terms of biological role, thiol-disulfide oxidoreductase involved in the redox regulation of a number of cytosolic enzymes. Activates the cytosolic malate dehydrogenase (MDH) probably by reducing an interchain disulfide bond of the inactive MDH homodimer. Possesses insulin disulfide bonds reducing activity. This chain is Thioredoxin H1 (TRX1), found in Arabidopsis thaliana (Mouse-ear cress).